The primary structure comprises 89 residues: Small ribosomal subunit protein uS15 (89 aa).

Belongs to the universal ribosomal protein uS15 family. Part of the 30S ribosomal subunit. Forms a bridge to the 50S subunit in the 70S ribosome, contacting the 23S rRNA.

One of the primary rRNA binding proteins, it binds directly to 16S rRNA where it helps nucleate assembly of the platform of the 30S subunit by binding and bridging several RNA helices of the 16S rRNA. In terms of biological role, forms an intersubunit bridge (bridge B4) with the 23S rRNA of the 50S subunit in the ribosome. This Rhizobium leguminosarum bv. trifolii (strain WSM2304) protein is Small ribosomal subunit protein uS15.